Consider the following 455-residue polypeptide: Bifunctional protein GlmU (455 aa).

Residues 1–226 form a pyrophosphorylase region; sequence MGLSVVILAA…EFEILGVNDR (226 aa). Residues 8–11, K22, Q73, 78–79, 99–101, G136, E151, N166, and N224 each bind UDP-N-acetyl-alpha-D-glucosamine; these read LAAG, GT, and YGD. Residue D101 participates in Mg(2+) binding. Position 224 (N224) interacts with Mg(2+). The interval 227-247 is linker; that stretch reads TQLASLERVWQRNVAEKIMAK. The interval 248–455 is N-acetyltransferase; the sequence is GVSIADPNRF…WQRSVKKTDK (208 aa). 2 residues coordinate UDP-N-acetyl-alpha-D-glucosamine: R330 and K348. The active-site Proton acceptor is H360. UDP-N-acetyl-alpha-D-glucosamine-binding residues include Y363 and N374. Residues A377, 383-384, S402, A420, and R437 each bind acetyl-CoA; that span reads NY.

It in the N-terminal section; belongs to the N-acetylglucosamine-1-phosphate uridyltransferase family. In the C-terminal section; belongs to the transferase hexapeptide repeat family. As to quaternary structure, homotrimer. Mg(2+) is required as a cofactor.

It localises to the cytoplasm. The enzyme catalyses alpha-D-glucosamine 1-phosphate + acetyl-CoA = N-acetyl-alpha-D-glucosamine 1-phosphate + CoA + H(+). The catalysed reaction is N-acetyl-alpha-D-glucosamine 1-phosphate + UTP + H(+) = UDP-N-acetyl-alpha-D-glucosamine + diphosphate. Its pathway is nucleotide-sugar biosynthesis; UDP-N-acetyl-alpha-D-glucosamine biosynthesis; N-acetyl-alpha-D-glucosamine 1-phosphate from alpha-D-glucosamine 6-phosphate (route II): step 2/2. It functions in the pathway nucleotide-sugar biosynthesis; UDP-N-acetyl-alpha-D-glucosamine biosynthesis; UDP-N-acetyl-alpha-D-glucosamine from N-acetyl-alpha-D-glucosamine 1-phosphate: step 1/1. The protein operates within bacterial outer membrane biogenesis; LPS lipid A biosynthesis. Its function is as follows. Catalyzes the last two sequential reactions in the de novo biosynthetic pathway for UDP-N-acetylglucosamine (UDP-GlcNAc). The C-terminal domain catalyzes the transfer of acetyl group from acetyl coenzyme A to glucosamine-1-phosphate (GlcN-1-P) to produce N-acetylglucosamine-1-phosphate (GlcNAc-1-P), which is converted into UDP-GlcNAc by the transfer of uridine 5-monophosphate (from uridine 5-triphosphate), a reaction catalyzed by the N-terminal domain. The polypeptide is Bifunctional protein GlmU (Francisella tularensis subsp. holarctica (strain OSU18)).